A 153-amino-acid chain; its full sequence is Neuromedin-S (153 aa).

An N-terminal signal peptide occupies residues 1-26 (MKHPLPHYSPILFIYCFCMLQIPSSG). 3 propeptides span residues 27 to 69 (ASPP…VYKR), 70 to 105 (FLFH…ASRR), and 106 to 108 (MKR). Asparagine 144 is modified (asparagine amide). Residues 147–153 (YTDNNFQ) constitute a propeptide that is removed on maturation.

The protein belongs to the NmU family.

It is found in the secreted. Its function is as follows. Implicated in the regulation of circadian rhythms through autocrine and/or paracrine actions. This Mus musculus (Mouse) protein is Neuromedin-S (Nms).